The chain runs to 28 residues: Odorant-binding protein 1 (28 aa).

The protein belongs to the calycin superfamily. Lipocalin family. In terms of tissue distribution, nasal mucosa.

Its subcellular location is the secreted. It localises to the extracellular space. This soluble protein may play a specific role in odor discrimination and perception. This Hystrix cristata (North African crested porcupine) protein is Odorant-binding protein 1.